The following is a 407-amino-acid chain: Na(+)-translocating NADH-quinone reductase subunit F (407 aa).

A helical transmembrane segment spans residues 6-26 (IFLAIGMFTAIVLGLVAIILV). Residues 35–127 (GDVTIQINGE…DMQIRVPEEV (93 aa)) enclose the 2Fe-2S ferredoxin-type domain. 4 residues coordinate [2Fe-2S] cluster: Cys70, Cys76, Cys79, and Cys111. In terms of domain architecture, FAD-binding FR-type spans 130–269 (VKKWECTVES…YGPFGEFFAK (140 aa)).

This sequence belongs to the NqrF family. Composed of six subunits; NqrA, NqrB, NqrC, NqrD, NqrE and NqrF. [2Fe-2S] cluster is required as a cofactor. Requires FAD as cofactor.

Its subcellular location is the cell inner membrane. It carries out the reaction a ubiquinone + n Na(+)(in) + NADH + H(+) = a ubiquinol + n Na(+)(out) + NAD(+). NQR complex catalyzes the reduction of ubiquinone-1 to ubiquinol by two successive reactions, coupled with the transport of Na(+) ions from the cytoplasm to the periplasm. The first step is catalyzed by NqrF, which accepts electrons from NADH and reduces ubiquinone-1 to ubisemiquinone by a one-electron transfer pathway. The chain is Na(+)-translocating NADH-quinone reductase subunit F from Pseudomonas aeruginosa (strain UCBPP-PA14).